A 266-amino-acid polypeptide reads, in one-letter code: Hemin import ATP-binding protein HmuV (266 aa).

The region spanning 2-242 (IEAVDICVQR…QNLRDVYSCS (241 aa)) is the ABC transporter domain. 34–41 (GPNGSGKS) lines the ATP pocket.

Belongs to the ABC transporter superfamily. Heme (hemin) importer (TC 3.A.1.14.5) family. In terms of assembly, the complex is composed of two ATP-binding proteins (HmuV), two transmembrane proteins (HmuU) and a solute-binding protein (HmuT).

It is found in the cell inner membrane. Its function is as follows. Part of the ABC transporter complex HmuTUV involved in hemin import. Responsible for energy coupling to the transport system. This is Hemin import ATP-binding protein HmuV from Bartonella henselae (strain ATCC 49882 / DSM 28221 / CCUG 30454 / Houston 1) (Rochalimaea henselae).